Reading from the N-terminus, the 111-residue chain is COX assembly mitochondrial protein (111 aa).

The 44-residue stretch at 39-82 (YKKCANFVQAMADCAKANGMKVFPTCDKQRDEMKSCLLFYQTDE) folds into the CHCH domain. 2 consecutive short sequence motifs (cx9C motif) follow at residues 42 to 52 (CANFVQAMADC) and 64 to 74 (CDKQRDEMKSC). 2 disulfides stabilise this stretch: Cys42–Cys74 and Cys52–Cys64.

Belongs to the CMC family.

Its subcellular location is the mitochondrion inner membrane. Functionally, required for mitochondrial cytochrome c oxidase (COX) assembly and respiration. Binds copper. May be involved in copper trafficking and distribution to mitochondrial COX and SOD1. The sequence is that of COX assembly mitochondrial protein (CMC1) from Saccharomyces cerevisiae (strain RM11-1a) (Baker's yeast).